A 278-amino-acid polypeptide reads, in one-letter code: Urease accessory protein UreD 1 (278 aa).

Belongs to the UreD family. As to quaternary structure, ureD, UreF and UreG form a complex that acts as a GTP-hydrolysis-dependent molecular chaperone, activating the urease apoprotein by helping to assemble the nickel containing metallocenter of UreC. The UreE protein probably delivers the nickel.

Its subcellular location is the cytoplasm. Required for maturation of urease via the functional incorporation of the urease nickel metallocenter. The sequence is that of Urease accessory protein UreD 1 from Bradyrhizobium sp. (strain ORS 278).